Consider the following 145-residue polypeptide: Cystatin-F (145 aa).

An N-terminal signal peptide occupies residues 1–19 (MRAAGTLLAFCCLVLSTTG). N62 is a glycosylation site (N-linked (GlcNAc...) asparagine). The short motif at 81-85 (QIVKG) is the Secondary area of contact element. Cysteines 99 and 110 form a disulfide. N115 is a glycosylation site (N-linked (GlcNAc...) asparagine). A disulfide bond links C124 and C144.

The protein belongs to the cystatin family. As to quaternary structure, homodimer; disulfide-linked. As to expression, primarily expressed in peripheral blood cells and spleen.

It is found in the secreted. The protein localises to the cytoplasm. Functionally, inhibits papain and cathepsin L but with affinities lower than other cystatins. May play a role in immune regulation through inhibition of a unique target in the hematopoietic system. This chain is Cystatin-F (CST7), found in Homo sapiens (Human).